Consider the following 1306-residue polypeptide: Contactin-associated protein-like 5 (1306 aa).

The first 24 residues, 1-24 (MDSLPRLTSVLTLLFSGLWHLGLT), serve as a signal peptide directing secretion. The Extracellular segment spans residues 25–1237 (ATNYNCDDPL…PLTNAVRSDS (1213 aa)). Residues 30–174 (CDDPLASLLS…IGMRVEVYGC (145 aa)) form the F5/8 type C domain. Cysteine 30 and cysteine 174 form a disulfide bridge. 2 Laminin G-like domains span residues 180-360 (VADF…TFSC) and 367-544 (PITF…IDLC). 3 N-linked (GlcNAc...) asparagine glycosylation sites follow: asparagine 282, asparagine 355, and asparagine 496. Cysteines 329 and 360 form a disulfide. 3 disulfides stabilise this stretch: cysteine 512-cysteine 544, cysteine 550-cysteine 561, and cysteine 555-cysteine 570. Residues 546 to 583 (IKDRCLPNYCEHGGSCSQSWTTFYCNCSDTSYTGATCH) enclose the EGF-like 1 domain. Residue asparagine 571 is glycosylated (N-linked (GlcNAc...) asparagine). A disulfide bond links cysteine 572 and cysteine 582. A Fibrinogen C-terminal domain is found at 584–790 (NSIYEQSCEV…LRCYGDRRFW (207 aa)). The N-linked (GlcNAc...) asparagine glycan is linked to asparagine 622. The 166-residue stretch at 791–956 (NAVSFYTEAS…KVTSGVRPGC (166 aa)) folds into the Laminin G-like 3 domain. Disulfide bonds link cysteine 929/cysteine 956, cysteine 960/cysteine 973, cysteine 967/cysteine 982, cysteine 984/cysteine 994, and cysteine 1164/cysteine 1199. The EGF-like 2 domain occupies 957 to 995 (PGHCSSYGSICHNGGKCVEKHNGYLCDCTNSPYEGPFCK). Residues 1013 to 1199 (QEPYPVTKNI…VHGTLTESSC (187 aa)) enclose the Laminin G-like 4 domain. A helical transmembrane segment spans residues 1238 to 1258 (AVIGGVIAVVIFIIFCIIGIM). Topologically, residues 1259-1306 (TRFLYQHKQSHRTSQMKEKEYPENLDSSFRNEIDLQNTVSECKREYFI) are cytoplasmic.

The protein belongs to the neurexin family.

The protein localises to the membrane. In terms of biological role, may play a role in the correct development and proper functioning of the peripheral and central nervous system and be involved in cell adhesion and intercellular communication. The chain is Contactin-associated protein-like 5 (CNTNAP5) from Homo sapiens (Human).